We begin with the raw amino-acid sequence, 107 residues long: Flagellar hook-basal body complex protein FliE (107 aa).

This sequence belongs to the FliE family.

It is found in the bacterial flagellum basal body. This is Flagellar hook-basal body complex protein FliE from Sodalis glossinidius (strain morsitans).